The primary structure comprises 36 residues: uncharacterized protein (36 aa).

Its subcellular location is the mitochondrion. This is an uncharacterized protein from Saccharomyces cerevisiae (strain ATCC 204508 / S288c) (Baker's yeast).